A 688-amino-acid polypeptide reads, in one-letter code: Translation initiation factor IF-2 (688 aa).

Residues 50-62 are compositionally biased toward basic and acidic residues; the sequence is LLSGKEKSEKTKE. Residues 50 to 95 form a disordered region; that stretch reads LLSGKEKSEKTKEEDDEIETTAKNPIKESINNKKSNKRDDKNEKVN. Low complexity predominate over residues 72–82; the sequence is KNPIKESINNK. Basic and acidic residues predominate over residues 86-95; sequence KRDDKNEKVN. Residues 187–354 form the tr-type G domain; the sequence is KRSPIITVMG…MILLSSEILE (168 aa). The segment at 196–203 is G1; the sequence is GHVDHGKT. 196–203 contributes to the GTP binding site; it reads GHVDHGKT. The tract at residues 221–225 is G2; the sequence is GITQH. A G3 region spans residues 242-245; that stretch reads DTPG. GTP contacts are provided by residues 242 to 246 and 296 to 299; these read DTPGH and NKID. The tract at residues 296–299 is G4; the sequence is NKID. A G5 region spans residues 332 to 334; the sequence is SAH.

Belongs to the TRAFAC class translation factor GTPase superfamily. Classic translation factor GTPase family. IF-2 subfamily.

It is found in the cytoplasm. In terms of biological role, one of the essential components for the initiation of protein synthesis. Protects formylmethionyl-tRNA from spontaneous hydrolysis and promotes its binding to the 30S ribosomal subunits. Also involved in the hydrolysis of GTP during the formation of the 70S ribosomal complex. This is Translation initiation factor IF-2 from Clostridium botulinum (strain Langeland / NCTC 10281 / Type F).